The following is a 190-amino-acid chain: Ferric nitrobindin-like protein (190 aa).

Positions 20–26 (GNWAGAG) match the GXWXGXG motif.

This sequence belongs to the nitrobindin family.

This is Ferric nitrobindin-like protein from Streptomyces griseus subsp. griseus (strain JCM 4626 / CBS 651.72 / NBRC 13350 / KCC S-0626 / ISP 5235).